A 229-amino-acid polypeptide reads, in one-letter code: Urease accessory protein UreF (229 aa).

This sequence belongs to the UreF family. In terms of assembly, ureD, UreF and UreG form a complex that acts as a GTP-hydrolysis-dependent molecular chaperone, activating the urease apoprotein by helping to assemble the nickel containing metallocenter of UreC. The UreE protein probably delivers the nickel.

It is found in the cytoplasm. In terms of biological role, required for maturation of urease via the functional incorporation of the urease nickel metallocenter. The polypeptide is Urease accessory protein UreF (Alcanivorax borkumensis (strain ATCC 700651 / DSM 11573 / NCIMB 13689 / SK2)).